Reading from the N-terminus, the 584-residue chain is 4-hydroxybenzoate decarboxylase subunit C (584 aa).

The protein belongs to the UbiD family. Component of the decarboxylase complex composed of the subunits B and C (Potential). The subunit D usually found in other organisms seems to be absent.

The enzyme catalyses 4-hydroxybenzoate + H(+) = phenol + CO2. With respect to regulation, the enzyme activity is enhanced by Mg(2+), Fe(2+), Mn(2+) and Ca(2+). No stimulation is observed with Cu(2+) and Zn(2+). Functionally, catalyzes the reversible decarboxylation of 4-hydroxybenzoate. This is 4-hydroxybenzoate decarboxylase subunit C from Chlamydia pneumoniae (Chlamydophila pneumoniae).